We begin with the raw amino-acid sequence, 595 residues long: Beta-(1--&gt;2)glucan export ATP-binding/permease protein NdvA (595 aa).

Residues 21-301 (SLLICSANVM…MSNFINLTIS (281 aa)) enclose the ABC transmembrane type-1 domain. Helical transmembrane passes span 22 to 42 (LLIC…PILF), 55 to 75 (IIPT…AYVL), 129 to 149 (IWLD…VLIP), 152 to 172 (FNMN…YVLI), and 248 to 268 (MAST…VAKG). The 235-residue stretch at 335–569 (IQFHHVTYKF…GGRFYKLLKA (235 aa)) folds into the ABC transporter domain. An ATP-binding site is contributed by 368–375 (GPTGAGKT).

It belongs to the ABC transporter superfamily. Beta-(1--&gt;2)glucan exporter (TC 3.A.1.108.1) family. As to quaternary structure, homodimer.

Its subcellular location is the cell inner membrane. It carries out the reaction [(1-&gt;2)-beta-D-glucosyl](n)(in) + ATP + H2O = [(1-&gt;2)-beta-D-glucosyl](n)(out) + ADP + phosphate + H(+). Functionally, involved in beta-(1--&gt;2)glucan export. Transmembrane domains (TMD) form a pore in the inner membrane and the ATP-binding domain (NBD) is responsible for energy generation. This Bartonella henselae (strain ATCC 49882 / DSM 28221 / CCUG 30454 / Houston 1) (Rochalimaea henselae) protein is Beta-(1--&gt;2)glucan export ATP-binding/permease protein NdvA.